The sequence spans 236 residues: Growth-regulating factor 12 (236 aa).

The segment at 1 to 27 (MLAEGRQVYLPPPPPSKLPRLSGTDPT) is disordered. The 36-residue stretch at 74-109 (ALTFMQRQELEQQVLIYRYFAAGAPVPVHLVLPIWK) folds into the QLQ domain. Residues 140-184 (EPEPGRCRRTDGKKWRCSRDVVPGHKYCERHVHRGRGRSRKPMEA) enclose the WRC domain. Short sequence motifs (bipartite nuclear localization signal) lie at residues 145–155 (RCRRTDGKKWR) and 173–180 (RGRGRSRK).

The protein belongs to the GRF family.

It localises to the nucleus. Its function is as follows. Transcription activator that plays a regulatory role in gibberellin-induced stem elongation. The protein is Growth-regulating factor 12 (GRF12) of Oryza sativa subsp. japonica (Rice).